Consider the following 382-residue polypeptide: Innexin-8 (382 aa).

4 consecutive transmembrane segments (helical) span residues 29 to 49, 103 to 123, 187 to 207, and 270 to 290; these read LITAFLFITAAILTSAKTYVG, QWSSMYLAVAGIAFMIPKFLW, VIKILYLVNAIAQFVIIAIFL, and IFLFFWFWLVFLVFSTLIAHF.

Belongs to the pannexin family.

Its subcellular location is the cell membrane. It is found in the cell junction. The protein resides in the gap junction. In terms of biological role, structural component of the gap junctions. This Caenorhabditis elegans protein is Innexin-8 (inx-8).